The chain runs to 1576 residues: eIF-2-alpha kinase GCN2 (1576 aa).

The RWD domain maps to 16–127; it reads NEIEALKAIF…SIVQDYLNDW (112 aa). The disordered stretch occupies residues 180–204; the sequence is QDELQRRSYETPQSSSKKKTNSKET. 2 Protein kinase domains span residues 235–511 and 556–928; these read VLPL…HVIR and FEEL…EEFI. ATP contacts are provided by residues 562-570 and Lys-585; that span reads LGRGGFGEV. Positions 673-714 are disordered; that stretch reads YNSSADEEDPEASDISFQYSNTSDKEGSSDKDSSIEEASSVK. Residues 695 to 706 show a composition bias toward basic and acidic residues; the sequence is SDKEGSSDKDSS. The active-site Proton acceptor is Asp-772.

Belongs to the protein kinase superfamily. Ser/Thr protein kinase family. GCN2 subfamily. Homodimer; homodimerization is important for kinase activation by uncharged tRNAs. Interacts (via N-terminal RWD domain) with gcn1 (via N- and C-terminus); this interaction stimulates gcn2 kinase activity in a gcn20-dependent manner in response to amino acid starvation. Interacts (via N-terminus) with the gcn1-gcn20 complex on translating ribosomes in amino acid-starved cells; gcn1 may bind near the ribosomal A-site and promotes the transfer of uncharged tRNAs from the A-site to the tRNA-binding domain in gcn2 for its subsequent kinase activation, and hence allowing fil1 translational activation and derepression of amino acid biosynthetic genes. In terms of processing, autophosphorylated.

It is found in the cytoplasm. It carries out the reaction L-seryl-[protein] + ATP = O-phospho-L-seryl-[protein] + ADP + H(+). The catalysed reaction is L-threonyl-[protein] + ATP = O-phospho-L-threonyl-[protein] + ADP + H(+). Its activity is regulated as follows. The integrated stress response (ISR) is activated in response to conditions that promote ribosome collisions: gcn1, which acts as a ribosome collision sensor, activates gcn2. The RQC pathway and the integrated stress response (ISR) antagonize each other: hel2 prevents the activation of gcn2, while gcn2 suppresses RQC activation. Ribosome stalling-induced integrated stress response prefers ribosomes with empty A sites. The kinase activity is stimulated upon binding to uncharged tRNAs. In terms of biological role, metabolic-stress sensing protein kinase that phosphorylates the alpha subunit of eukaryotic translation initiation factor 2 (eIF-2-alpha/SUI2) on 'Ser-52' in response to low amino acid, carbon, or purine availability. Required for adapatation to nutrient starvation by acting as a key component of the integrated stress response (ISR), by which cells alter their translational and transcriptional output in response to starvation. Converts phosphorylated eIF-2-alpha/SUI2 either to a competitive inhibitor of translation initiation factor eIF-2B, leading to a global protein synthesis repression, and thus to a reduced overall utilization of amino acids, or to a translational initiation activation of specific mRNAs, such as the transcriptional activator GCN4, and hence allowing GCN4-mediated reprogramming of transcription to alleviate nutrient depletion. Binds uncharged tRNAs. This chain is eIF-2-alpha kinase GCN2, found in Schizosaccharomyces pombe (strain 972 / ATCC 24843) (Fission yeast).